The chain runs to 93 residues: Pyrimidine/purine nucleoside phosphorylase (93 aa).

The protein belongs to the nucleoside phosphorylase PpnP family.

It catalyses the reaction a purine D-ribonucleoside + phosphate = a purine nucleobase + alpha-D-ribose 1-phosphate. The catalysed reaction is adenosine + phosphate = alpha-D-ribose 1-phosphate + adenine. It carries out the reaction cytidine + phosphate = cytosine + alpha-D-ribose 1-phosphate. The enzyme catalyses guanosine + phosphate = alpha-D-ribose 1-phosphate + guanine. It catalyses the reaction inosine + phosphate = alpha-D-ribose 1-phosphate + hypoxanthine. The catalysed reaction is thymidine + phosphate = 2-deoxy-alpha-D-ribose 1-phosphate + thymine. It carries out the reaction uridine + phosphate = alpha-D-ribose 1-phosphate + uracil. The enzyme catalyses xanthosine + phosphate = alpha-D-ribose 1-phosphate + xanthine. Functionally, catalyzes the phosphorolysis of diverse nucleosides, yielding D-ribose 1-phosphate and the respective free bases. Can use uridine, adenosine, guanosine, cytidine, thymidine, inosine and xanthosine as substrates. Also catalyzes the reverse reactions. The polypeptide is Pyrimidine/purine nucleoside phosphorylase (Pseudomonas savastanoi pv. phaseolicola (strain 1448A / Race 6) (Pseudomonas syringae pv. phaseolicola (strain 1448A / Race 6))).